We begin with the raw amino-acid sequence, 75 residues long: Small ribosomal subunit protein bS16c (75 aa).

The protein belongs to the bacterial ribosomal protein bS16 family.

Its subcellular location is the plastid. It is found in the chloroplast. The polypeptide is Small ribosomal subunit protein bS16c (Cyanidium caldarium (Red alga)).